A 262-amino-acid chain; its full sequence is Thrombin-like enzyme gyroxin B1.4 (262 aa).

A signal peptide spans 1–18; that stretch reads MVLIRVLANLLILQLSYA. Residues 19-262 constitute a propeptide that is removed on maturation; sequence QKSSELVIGG…AGNTIVNCPP (244 aa). Residues 25-253 form the Peptidase S1 domain; it reads VIGGDECNIN…HLDWIQSIIA (229 aa). 6 disulfide bridges follow: C31/C165, C52/C68, C102/C260, C144/C214, C176/C193, and C204/C229. The active-site Charge relay system is the H67. Residue N105 is glycosylated (N-linked (GlcNAc...) asparagine). D112 functions as the Charge relay system in the catalytic mechanism. The active-site Charge relay system is S208.

This sequence belongs to the peptidase S1 family. Snake venom subfamily. As to quaternary structure, monomer. Expressed by the venom gland.

It localises to the secreted. Its function is as follows. Thrombin-like snake venom serine protease. Displays a specificity similar to trypsin. Releases only fibrinopeptide A in the conversion of fibrinogen to fibrin. Shows coagulant, esterase and amidase activities. Reversibly increases the permeability of the blood brain barrier (BBB) in mice. Induces the barrel rotation syndrome in mice, which is manifested by gyroxin-like, rapid rolling motions. This syndrome may be due to its effect on BBB permeability, and certainly also to other actions affecting endogenous substrates present in the endothelium, nervous tissues or blood. This chain is Thrombin-like enzyme gyroxin B1.4, found in Crotalus durissus terrificus (South American rattlesnake).